The following is a 93-amino-acid chain: Putative pterin-4-alpha-carbinolamine dehydratase (93 aa).

It belongs to the pterin-4-alpha-carbinolamine dehydratase family.

The enzyme catalyses (4aS,6R)-4a-hydroxy-L-erythro-5,6,7,8-tetrahydrobiopterin = (6R)-L-erythro-6,7-dihydrobiopterin + H2O. This Chloroflexus aurantiacus (strain ATCC 29366 / DSM 635 / J-10-fl) protein is Putative pterin-4-alpha-carbinolamine dehydratase.